Consider the following 245-residue polypeptide: 8-amino-3,8-dideoxy-manno-octulosonate cytidylyltransferase (245 aa).

It belongs to the KdsB family.

It localises to the cytoplasm. It catalyses the reaction 8-amino-3,8-dideoxy-alpha-D-manno-octulosonate + CTP = CMP-8-amino-3,8-dideoxy-alpha-D-manno-oct-2-ulosonate + diphosphate. It participates in bacterial outer membrane biogenesis; lipopolysaccharide biosynthesis. Its function is as follows. Activates KDO8N (a required 8-carbon sugar) for incorporation into bacterial lipopolysaccharide in the Shewanella genus. The polypeptide is 8-amino-3,8-dideoxy-manno-octulosonate cytidylyltransferase (Shewanella halifaxensis (strain HAW-EB4)).